The chain runs to 444 residues: Alpha-(1,3)-fucosyltransferase B (444 aa).

At 1 to 6 (MRLAQR) the chain is on the cytoplasmic side. The helical; Signal-anchor for type II membrane protein transmembrane segment at 7 to 27 (YGIALVALLMVGATVLFFWSE) threads the bilayer. The Lumenal portion of the chain corresponds to 28–444 (NIINYENIKF…GNNCSNSSNT (417 aa)). Residues asparagine 279, asparagine 437, and asparagine 440 are each glycosylated (N-linked (GlcNAc...) asparagine).

The protein belongs to the glycosyltransferase 10 family.

It is found in the golgi apparatus. The protein localises to the golgi stack membrane. Its pathway is protein modification; protein glycosylation. The polypeptide is Alpha-(1,3)-fucosyltransferase B (FucTB) (Drosophila melanogaster (Fruit fly)).